The chain runs to 571 residues: Proline--tRNA ligase (571 aa).

Belongs to the class-II aminoacyl-tRNA synthetase family. ProS type 1 subfamily. Homodimer.

The protein resides in the cytoplasm. It carries out the reaction tRNA(Pro) + L-proline + ATP = L-prolyl-tRNA(Pro) + AMP + diphosphate. Its function is as follows. Catalyzes the attachment of proline to tRNA(Pro) in a two-step reaction: proline is first activated by ATP to form Pro-AMP and then transferred to the acceptor end of tRNA(Pro). As ProRS can inadvertently accommodate and process non-cognate amino acids such as alanine and cysteine, to avoid such errors it has two additional distinct editing activities against alanine. One activity is designated as 'pretransfer' editing and involves the tRNA(Pro)-independent hydrolysis of activated Ala-AMP. The other activity is designated 'posttransfer' editing and involves deacylation of mischarged Ala-tRNA(Pro). The misacylated Cys-tRNA(Pro) is not edited by ProRS. This Pasteurella multocida (strain Pm70) protein is Proline--tRNA ligase.